Consider the following 382-residue polypeptide: Carbamoyl phosphate synthase small chain (382 aa).

A CPSase region spans residues 1–189; that stretch reads MIKSALLVLE…GLPEAKSEDD (189 aa). L-glutamine-binding residues include Ser-47 and Gly-241. Residues 193 to 380 enclose the Glutamine amidotransferase type-1 domain; it reads HVVAYDFGAK…IELIKHYRSS (188 aa). Cys-269 functions as the Nucleophile in the catalytic mechanism. Residues Leu-270, Gln-273, Asn-311, Gly-313, and Phe-314 each coordinate L-glutamine. Active-site residues include His-353 and Glu-355.

It belongs to the CarA family. Composed of two chains; the small (or glutamine) chain promotes the hydrolysis of glutamine to ammonia, which is used by the large (or ammonia) chain to synthesize carbamoyl phosphate. Tetramer of heterodimers (alpha,beta)4.

The catalysed reaction is hydrogencarbonate + L-glutamine + 2 ATP + H2O = carbamoyl phosphate + L-glutamate + 2 ADP + phosphate + 2 H(+). The enzyme catalyses L-glutamine + H2O = L-glutamate + NH4(+). It functions in the pathway amino-acid biosynthesis; L-arginine biosynthesis; carbamoyl phosphate from bicarbonate: step 1/1. The protein operates within pyrimidine metabolism; UMP biosynthesis via de novo pathway; (S)-dihydroorotate from bicarbonate: step 1/3. Small subunit of the glutamine-dependent carbamoyl phosphate synthetase (CPSase). CPSase catalyzes the formation of carbamoyl phosphate from the ammonia moiety of glutamine, carbonate, and phosphate donated by ATP, constituting the first step of 2 biosynthetic pathways, one leading to arginine and/or urea and the other to pyrimidine nucleotides. The small subunit (glutamine amidotransferase) binds and cleaves glutamine to supply the large subunit with the substrate ammonia. The protein is Carbamoyl phosphate synthase small chain of Salmonella typhi.